The primary structure comprises 128 residues: Small ribosomal subunit protein uS13 (128 aa).

Residues 95 to 118 show a composition bias toward basic residues; it reads GLPVRGQRTHTNARTRKGPKKGLV. The tract at residues 95-128 is disordered; that stretch reads GLPVRGQRTHTNARTRKGPKKGLVRKAAAPAPKA.

The protein belongs to the universal ribosomal protein uS13 family. As to quaternary structure, part of the 30S ribosomal subunit. Forms a loose heterodimer with protein S19. Forms two bridges to the 50S subunit in the 70S ribosome.

In terms of biological role, located at the top of the head of the 30S subunit, it contacts several helices of the 16S rRNA. In the 70S ribosome it contacts the 23S rRNA (bridge B1a) and protein L5 of the 50S subunit (bridge B1b), connecting the 2 subunits; these bridges are implicated in subunit movement. Contacts the tRNAs in the A and P-sites. In Anaeromyxobacter sp. (strain K), this protein is Small ribosomal subunit protein uS13.